The sequence spans 4730 residues: Dynein heavy chain, cytoplasmic (4730 aa).

Disordered regions lie at residues 1-23 (MEDQ…VVTP) and 91-120 (TINS…QQQS). The stem stretch occupies residues 1–1935 (MEDQQINVDS…VIHMANATFY (1935 aa)). Residues 10 to 23 (SPTSGTNTPPVVTP) are compositionally biased toward low complexity. A coiled-coil region spans residues 867 to 900 (VRKLSTSINNFRDKVDDLIVKYSEIKKQLDGLKS). Positions 964–1016 (EDQKDSQSTSGSSNKGGKLNRMNYSIRNKSDEENSSDLTQPQQSQQQQQTISI) are disordered. Residues 969 to 978 (SQSTSGSSNK) are compositionally biased toward polar residues. A compositionally biased stretch (low complexity) spans 1002–1016 (TQPQQSQQQQQTISI). 4 coiled-coil regions span residues 1204-1224 (EKMN…EKLS), 1343-1372 (ALET…QALD), 1425-1441 (RKVR…LKNL), and 1661-1689 (AIER…YLER). AAA regions lie at residues 1936–2158 (YGFE…VLVS), 2238–2531 (KKIQ…FTRL), 2635–2885 (EVET…WDRA), and 2978–3252 (VFYE…QGRQ). Residue 1974–1981 (GPAGTGKT) coordinates ATP. The stretch at 2231 to 2253 (IQMDQLRKKIQEIAKQRHLVTKQ) forms a coiled coil. An ATP-binding site is contributed by 2276–2283 (GPSGGGKT). The segment at 2437 to 2486 (EPFDPQEKEQQKRNENAQLQQQQQTTITSPILTSPPTTSSSSRSTTSTTS) is disordered. Basic and acidic residues predominate over residues 2441–2451 (PQEKEQQKRNE). Residues 2442 to 2462 (QEKEQQKRNENAQLQQQQQTT) adopt a coiled-coil conformation. The span at 2454-2486 (QLQQQQQTTITSPILTSPPTTSSSSRSTTSTTS) shows a compositional bias: low complexity. ATP-binding positions include 2674–2681 (GPPGSGKT) and 3016–3023 (GVSGGGKS). 3 coiled-coil regions span residues 3271-3349 (INEK…VQLD), 3483-3585 (AQTY…NTQM), and 3854-3881 (TLET…EISE). Residues 3271–3585 (INEKRDQLEE…QQSENFNTQM (315 aa)) are stalk. AAA regions lie at residues 3638-3867 (LSKP…EIAL) and 4098-4312 (SHSF…SIDY). The interval 4432–4465 (KMQSSEEDGEDDQVSGSSKKESSSSSSEDKGKAK) is disordered. Residues 4449-4463 (SKKESSSSSSEDKGK) show a composition bias toward basic and acidic residues.

Belongs to the dynein heavy chain family. Consists of at least two heavy chains and a number of intermediate and light chains.

The protein resides in the cytoplasm. Its subcellular location is the cytoskeleton. In terms of biological role, cytoplasmic dynein acts as a motor for the intracellular retrograde motility of vesicles and organelles along microtubules. Dynein has ATPase activity; the force-producing power stroke is thought to occur on release of ADP. In Dictyostelium discoideum (Social amoeba), this protein is Dynein heavy chain, cytoplasmic (dhcA).